We begin with the raw amino-acid sequence, 181 residues long: Large ribosomal subunit protein bL17 (181 aa).

Low complexity predominate over residues 141–159 (KAASATAESAPVATANDAA). The segment at 141–181 (KAASATAESAPVATANDAAPAEEAEVQGVKDPAEDCEAKAD) is disordered. Residues 171 to 181 (DPAEDCEAKAD) show a composition bias toward basic and acidic residues.

Belongs to the bacterial ribosomal protein bL17 family. In terms of assembly, part of the 50S ribosomal subunit. Contacts protein L32.

This is Large ribosomal subunit protein bL17 from Geotalea daltonii (strain DSM 22248 / JCM 15807 / FRC-32) (Geobacter daltonii).